Reading from the N-terminus, the 443-residue chain is D-serine dehydratase (443 aa).

An N6-(pyridoxal phosphate)lysine modification is found at Lys118.

This sequence belongs to the serine/threonine dehydratase family. DsdA subfamily. In terms of assembly, monomer. Pyridoxal 5'-phosphate serves as cofactor.

It carries out the reaction D-serine = pyruvate + NH4(+). The sequence is that of D-serine dehydratase from Escherichia coli O17:K52:H18 (strain UMN026 / ExPEC).